A 633-amino-acid polypeptide reads, in one-letter code: Probable alkaline/neutral invertase A, chloroplastic (633 aa).

Residues 1–71 (MNAITFLGNS…TNAVPFCTDR (71 aa)) constitute a chloroplast transit peptide. Residue Ser-623 is modified to Phosphoserine.

Belongs to the glycosyl hydrolase 100 family. As to expression, expressed in flowers.

The protein resides in the plastid. Its subcellular location is the chloroplast. The enzyme catalyses Hydrolysis of terminal non-reducing beta-D-fructofuranoside residues in beta-D-fructofuranosides.. Its function is as follows. Chloroplastic invertase that cleaves sucrose into glucose and fructose and may participate in the carbon flux between the cytosol and plastids in leaves. The sequence is that of Probable alkaline/neutral invertase A, chloroplastic from Arabidopsis thaliana (Mouse-ear cress).